We begin with the raw amino-acid sequence, 669 residues long: DNA ligase (669 aa).

Residues 34-38 (DAEYD), 83-84 (SL), and E114 contribute to the NAD(+) site. Catalysis depends on K116, which acts as the N6-AMP-lysine intermediate. NAD(+) is bound by residues R137, E171, K287, and K311. 4 residues coordinate Zn(2+): C405, C408, C423, and C428. The region spanning 591 to 669 (NVESYFAGKT…EERFLQELNK (79 aa)) is the BRCT domain.

This sequence belongs to the NAD-dependent DNA ligase family. LigA subfamily. Mg(2+) is required as a cofactor. Requires Mn(2+) as cofactor.

The catalysed reaction is NAD(+) + (deoxyribonucleotide)n-3'-hydroxyl + 5'-phospho-(deoxyribonucleotide)m = (deoxyribonucleotide)n+m + AMP + beta-nicotinamide D-nucleotide.. Functionally, DNA ligase that catalyzes the formation of phosphodiester linkages between 5'-phosphoryl and 3'-hydroxyl groups in double-stranded DNA using NAD as a coenzyme and as the energy source for the reaction. It is essential for DNA replication and repair of damaged DNA. This Bacillus anthracis (strain A0248) protein is DNA ligase.